Here is a 158-residue protein sequence, read N- to C-terminus: Snaclec flavocetin-A subunit alpha (158 aa).

An N-terminal signal peptide occupies residues Met1–Ala23. Intrachain disulfides connect Cys27-Cys38, Cys55-Cys152, and Cys127-Cys144. Positions Tyr34–Lys153 constitute a C-type lectin domain.

It belongs to the snaclec family. In terms of assembly, tetramer of heterodimers of alpha and beta subunits (alphabeta)(4); disulfide-linked. Expressed by the venom gland.

The protein localises to the secreted. Strong platelet aggregation inhibitor. Binds specifically to platelet glycoprotein Ibalpha (GP1BA) with high affinity and inhibits vWF-dependent platelet aggregation. Has also been observed to induce small agglutinates in washed platelets by binding to GPIb. The sequence is that of Snaclec flavocetin-A subunit alpha from Protobothrops flavoviridis (Habu).